A 338-amino-acid polypeptide reads, in one-letter code: Glyceraldehyde-3-phosphate dehydrogenase 2 (338 aa).

NAD(+) is bound by residues 11 to 12 (RI), Asp-33, and Arg-78. Residues 149-151 (SCT), Thr-180, 209-210 (TG), and Arg-232 each bind D-glyceraldehyde 3-phosphate. The active-site Nucleophile is the Cys-150. Asn-314 lines the NAD(+) pocket.

Belongs to the glyceraldehyde-3-phosphate dehydrogenase family. As to quaternary structure, homotetramer.

It is found in the cytoplasm. It carries out the reaction D-glyceraldehyde 3-phosphate + phosphate + NAD(+) = (2R)-3-phospho-glyceroyl phosphate + NADH + H(+). Its pathway is carbohydrate degradation; glycolysis; pyruvate from D-glyceraldehyde 3-phosphate: step 1/5. In Agaricus bisporus (White button mushroom), this protein is Glyceraldehyde-3-phosphate dehydrogenase 2 (gpd2).